The primary structure comprises 210 residues: Small ribosomal subunit protein uS3 (210 aa).

A KH type-2 domain is found at 38-106; it reads IRAFLKKRLY…EIFINIIEVR (69 aa).

It belongs to the universal ribosomal protein uS3 family. In terms of assembly, part of the 30S ribosomal subunit. Forms a tight complex with proteins S10 and S14.

Its function is as follows. Binds the lower part of the 30S subunit head. Binds mRNA in the 70S ribosome, positioning it for translation. The chain is Small ribosomal subunit protein uS3 from Pelobacter propionicus (strain DSM 2379 / NBRC 103807 / OttBd1).